Reading from the N-terminus, the 78-residue chain is Polcalcin Phl p 7 (78 aa).

2 consecutive EF-hand domains span residues 1–35 (MADD…LGST) and 35–70 (TSAD…NPGL). Ca(2+) is bound by residues aspartate 13, asparagine 15, aspartate 17, lysine 19, glutamate 24, aspartate 48, aspartate 50, aspartate 52, and glutamate 59.

Monomer. As to expression, specifically expressed in pollen.

Functionally, may be involved in the regulation of pollen-tube growth. This Phleum pratense (Common timothy) protein is Polcalcin Phl p 7.